A 428-amino-acid polypeptide reads, in one-letter code: Serine--tRNA ligase (428 aa).

Position 235-237 (235-237 (TAE)) interacts with L-serine. 266-268 (RSE) lines the ATP pocket. Glu-289 serves as a coordination point for L-serine. 353-356 (EISS) provides a ligand contact to ATP. Ser-389 contacts L-serine.

The protein belongs to the class-II aminoacyl-tRNA synthetase family. Type-1 seryl-tRNA synthetase subfamily. As to quaternary structure, homodimer. The tRNA molecule binds across the dimer.

The protein localises to the cytoplasm. It carries out the reaction tRNA(Ser) + L-serine + ATP = L-seryl-tRNA(Ser) + AMP + diphosphate + H(+). The enzyme catalyses tRNA(Sec) + L-serine + ATP = L-seryl-tRNA(Sec) + AMP + diphosphate + H(+). The protein operates within aminoacyl-tRNA biosynthesis; selenocysteinyl-tRNA(Sec) biosynthesis; L-seryl-tRNA(Sec) from L-serine and tRNA(Sec): step 1/1. Its function is as follows. Catalyzes the attachment of serine to tRNA(Ser). Is also able to aminoacylate tRNA(Sec) with serine, to form the misacylated tRNA L-seryl-tRNA(Sec), which will be further converted into selenocysteinyl-tRNA(Sec). The sequence is that of Serine--tRNA ligase from Shewanella sp. (strain ANA-3).